Consider the following 335-residue polypeptide: Transaldolase (335 aa).

The residue at position 2 (Ser-2) is an N-acetylserine. Lys-144 serves as the catalytic Schiff-base intermediate with substrate.

This sequence belongs to the transaldolase family. Type 1 subfamily. Homodimer.

The enzyme catalyses D-sedoheptulose 7-phosphate + D-glyceraldehyde 3-phosphate = D-erythrose 4-phosphate + beta-D-fructose 6-phosphate. It functions in the pathway carbohydrate degradation; pentose phosphate pathway; D-glyceraldehyde 3-phosphate and beta-D-fructose 6-phosphate from D-ribose 5-phosphate and D-xylulose 5-phosphate (non-oxidative stage): step 2/3. Its function is as follows. Transaldolase is important for the balance of metabolites in the pentose-phosphate pathway. The sequence is that of Transaldolase (TAL1) from Saccharomyces cerevisiae (strain ATCC 204508 / S288c) (Baker's yeast).